Consider the following 134-residue polypeptide: Probable 4-amino-4-deoxy-L-arabinose-phosphoundecaprenol flippase subunit ArnF (134 aa).

At 1-5 (MNRRR) the chain is on the cytoplasmic side. The chain crosses the membrane as a helical span at residues 6-26 (GILFALASVLLVSVAQLSMRW). Topologically, residues 27–45 (SMTRLPRPDQWLSVPSVDS) are periplasmic. A helical transmembrane segment spans residues 46-66 (VALAVVLAAIFAYALSMLCWL). The Cytoplasmic segment spans residues 67 to 77 (AALRDLPLGRA). A helical transmembrane segment spans residues 78–98 (YSLLSISYALVYLLAASLPLF). The Periplasmic segment spans residues 99–101 (NES). Residues 102 to 122 (FSFSKSLGVALVMLGVITINT) traverse the membrane as a helical segment. The Cytoplasmic portion of the chain corresponds to 123 to 134 (RPARAPELRSSP).

The protein belongs to the ArnF family. Heterodimer of ArnE and ArnF.

It is found in the cell inner membrane. Its pathway is bacterial outer membrane biogenesis; lipopolysaccharide biosynthesis. In terms of biological role, translocates 4-amino-4-deoxy-L-arabinose-phosphoundecaprenol (alpha-L-Ara4N-phosphoundecaprenol) from the cytoplasmic to the periplasmic side of the inner membrane. This chain is Probable 4-amino-4-deoxy-L-arabinose-phosphoundecaprenol flippase subunit ArnF, found in Pseudomonas fluorescens (strain Pf0-1).